We begin with the raw amino-acid sequence, 152 residues long: Large ribosomal subunit protein uL13 (152 aa).

Belongs to the universal ribosomal protein uL13 family. In terms of assembly, part of the 50S ribosomal subunit.

In terms of biological role, this protein is one of the early assembly proteins of the 50S ribosomal subunit, although it is not seen to bind rRNA by itself. It is important during the early stages of 50S assembly. The sequence is that of Large ribosomal subunit protein uL13 from Neorickettsia sennetsu (strain ATCC VR-367 / Miyayama) (Ehrlichia sennetsu).